The following is a 202-amino-acid chain: Small ribosomal subunit protein uS5 (202 aa).

Residues 46–109 (LKSEVLSVGF…RRAKLNIVPV (64 aa)) enclose the S5 DRBM domain.

Belongs to the universal ribosomal protein uS5 family. As to quaternary structure, part of the 30S ribosomal subunit. Contacts protein S4.

Its function is as follows. With S4 and S12 plays an important role in translational accuracy. The polypeptide is Small ribosomal subunit protein uS5 (Thermofilum pendens (strain DSM 2475 / Hrk 5)).